Here is a 56-residue protein sequence, read N- to C-terminus: Large ribosomal subunit protein bL32 (56 aa).

Over residues Met-1 to Arg-16 the composition is skewed to basic residues. Positions Met-1–Lys-56 are disordered. Over residues Pro-25–Gly-34 the composition is skewed to polar residues.

Belongs to the bacterial ribosomal protein bL32 family.

This chain is Large ribosomal subunit protein bL32, found in Pseudoalteromonas translucida (strain TAC 125).